The sequence spans 74 residues: Translation initiation factor IF-1 (74 aa).

Positions 1 to 72 (MSKEDAIEVE…NKGRITYRLK (72 aa)) constitute an S1-like domain.

It belongs to the IF-1 family. As to quaternary structure, component of the 30S ribosomal translation pre-initiation complex which assembles on the 30S ribosome in the order IF-2 and IF-3, IF-1 and N-formylmethionyl-tRNA(fMet); mRNA recruitment can occur at any time during PIC assembly.

It is found in the cytoplasm. One of the essential components for the initiation of protein synthesis. Stabilizes the binding of IF-2 and IF-3 on the 30S subunit to which N-formylmethionyl-tRNA(fMet) subsequently binds. Helps modulate mRNA selection, yielding the 30S pre-initiation complex (PIC). Upon addition of the 50S ribosomal subunit IF-1, IF-2 and IF-3 are released leaving the mature 70S translation initiation complex. In Synechococcus sp. (strain JA-3-3Ab) (Cyanobacteria bacterium Yellowstone A-Prime), this protein is Translation initiation factor IF-1.